An 855-amino-acid polypeptide reads, in one-letter code: DNA mismatch repair protein MutS (855 aa).

616–623 (GPNMGGKS) lines the ATP pocket.

This sequence belongs to the DNA mismatch repair MutS family.

Functionally, this protein is involved in the repair of mismatches in DNA. It is possible that it carries out the mismatch recognition step. This protein has a weak ATPase activity. This chain is DNA mismatch repair protein MutS, found in Salmonella dublin (strain CT_02021853).